Consider the following 644-residue polypeptide: Exoribonuclease 2 (644 aa).

Residues 189 to 516 (REDLTSLDFV…NHRLLKAVIK (328 aa)) enclose the RNB domain. The S1 motif domain occupies 561 to 643 (GTRFAAEIVD…ETRSIIARPV (83 aa)).

This sequence belongs to the RNR ribonuclease family. RNase II subfamily.

The protein localises to the cytoplasm. It carries out the reaction Exonucleolytic cleavage in the 3'- to 5'-direction to yield nucleoside 5'-phosphates.. Its function is as follows. Involved in mRNA degradation. Hydrolyzes single-stranded polyribonucleotides processively in the 3' to 5' direction. The sequence is that of Exoribonuclease 2 from Shigella flexneri serotype 5b (strain 8401).